The sequence spans 446 residues: Exopolygalacturonase (446 aa).

The signal sequence occupies residues M1–A17. N53, N118, N134, and N204 each carry an N-linked (GlcNAc...) asparagine glycan. One copy of the PbH1 1 repeat lies at S236–P257. Residue D250 is the Proton donor of the active site. Residues C252 and C269 are joined by a disulfide bond. N-linked (GlcNAc...) asparagine glycosylation is found at N258 and N270. PbH1 repeat units lie at residues S259–S279, V290–V311, and V332–Q353. H273 is an active-site residue. N-linked (GlcNAc...) asparagine glycans are attached at residues N297, N302, N334, N359, and N369. 2 PbH1 repeats span residues P367–S398 and C403–V434. Intrachain disulfides connect C397-C403 and C424-C436. The N-linked (GlcNAc...) asparagine glycan is linked to N435.

It belongs to the glycosyl hydrolase 28 family.

It localises to the secreted. The enzyme catalyses [(1-&gt;4)-alpha-D-galacturonosyl](n) + H2O = alpha-D-galacturonate + [(1-&gt;4)-alpha-D-galacturonosyl](n-1). Functionally, hydrolysis of 1,4-alpha-D-galactosiduronic linkages in pectate and other galacturonans. This Cochliobolus carbonum (Maize leaf spot fungus) protein is Exopolygalacturonase (PGX1).